A 426-amino-acid polypeptide reads, in one-letter code: Histidine--tRNA ligase (426 aa).

It belongs to the class-II aminoacyl-tRNA synthetase family. As to quaternary structure, homodimer.

It localises to the cytoplasm. It catalyses the reaction tRNA(His) + L-histidine + ATP = L-histidyl-tRNA(His) + AMP + diphosphate + H(+). In Streptococcus agalactiae serotype Ia (strain ATCC 27591 / A909 / CDC SS700), this protein is Histidine--tRNA ligase.